Reading from the N-terminus, the 105-residue chain is ESAT-6-like protein EsxB (105 aa).

Positions 1–23 (MSQGFKTEADVMRNTAHRVDDTN) are disordered. Over residues 7–21 (TEADVMRNTAHRVDD) the composition is skewed to basic and acidic residues.

Belongs to the WXG100 family. CFP-10 subfamily. Forms a tight 1:1 complex with EsxB.

This is ESAT-6-like protein EsxB from Corynebacterium diphtheriae (strain ATCC 700971 / NCTC 13129 / Biotype gravis).